Consider the following 418-residue polypeptide: Gamma-glutamyl phosphate reductase (418 aa).

The protein belongs to the gamma-glutamyl phosphate reductase family.

The protein resides in the cytoplasm. The enzyme catalyses L-glutamate 5-semialdehyde + phosphate + NADP(+) = L-glutamyl 5-phosphate + NADPH + H(+). The protein operates within amino-acid biosynthesis; L-proline biosynthesis; L-glutamate 5-semialdehyde from L-glutamate: step 2/2. Its function is as follows. Catalyzes the NADPH-dependent reduction of L-glutamate 5-phosphate into L-glutamate 5-semialdehyde and phosphate. The product spontaneously undergoes cyclization to form 1-pyrroline-5-carboxylate. The protein is Gamma-glutamyl phosphate reductase of Thermobifida fusca (strain YX).